Reading from the N-terminus, the 203-residue chain is E3 ubiquitin-protein ligase RNF152 (203 aa).

An RING-type zinc finger spans residues 12 to 55 (CQICFNYYSPRRRPKLLDCKHTCCSVCLQQMRTSQKDVRCPWCR). The segment at 106-165 (ISKERTLLPGDMGCRLLPGSQQKSLTVVTIPAEQQPLQGGAPQEAVEEEPDRRGVAKSST) is necessary for interaction with RRAGA. The segment at 140–159 (QPLQGGAPQEAVEEEPDRRG) is disordered. The chain crosses the membrane as a helical span at residues 167 to 187 (SGVCTVILVACVLVFLLGIVL).

This sequence belongs to the RNF152 family. As to quaternary structure, interacts with RRAGA (inactive GDP-bound form); stimulated by amino acid starvation. Interacts with SEC16A. Ubiquitinated. Autoubiquitinated in vitro, leading to its degradation by the proteasome.

The protein resides in the lysosome membrane. It catalyses the reaction S-ubiquitinyl-[E2 ubiquitin-conjugating enzyme]-L-cysteine + [acceptor protein]-L-lysine = [E2 ubiquitin-conjugating enzyme]-L-cysteine + N(6)-ubiquitinyl-[acceptor protein]-L-lysine.. The protein operates within protein modification; protein ubiquitination. Its function is as follows. E3 ubiquitin-protein ligase that acts as a negative regulator of mTORC1 signaling by mediating ubiquitination of RagA/RRAGA and RHEB. Catalyzes 'Lys-63'-linked polyubiquitination of RagA/RRAGA in response to amino acid starvation, thereby regulating mTORC1 signaling. Also mediates monoubiquitination of RHEB, promoting its association with the TSC-TBC complex and subsequent inhibition. Also mediates 'Lys-48'-linked polyubiquitination of target proteins and their subsequent targeting to the proteasome for degradation. Induces apoptosis when overexpressed. In Rattus norvegicus (Rat), this protein is E3 ubiquitin-protein ligase RNF152.